We begin with the raw amino-acid sequence, 137 residues long: MLCISNIMLEKPNKGGIMRYGKIGVATAMAVGAAVGYAVESGKWFITVIAVLAGVALLSLVKRRVDEVVEDERTVRVGERASRRTVEIFSIGAALSGAVMLALDLHTEAALALEFAVCCVLVLYLIFYGYYSFRALD.

4 consecutive transmembrane segments (helical) span residues 20-39 (YGKI…GYAV), 44-61 (WFIT…LSLV), 86-105 (VEIF…ALDL), and 109-131 (AALA…YGYY).

The protein resides in the cell membrane. This is an uncharacterized protein from Archaeoglobus fulgidus (strain ATCC 49558 / DSM 4304 / JCM 9628 / NBRC 100126 / VC-16).